A 241-amino-acid chain; its full sequence is Probable GTP-binding protein EngB (241 aa).

Residues 56-240 (GPVEIAFAGR…RAAIALLLKE (185 aa)) enclose the EngB-type G domain. Residues 64–71 (GRSNVGKS), 91–95 (GRTQE), 118–121 (DMPG), 185–188 (TKID), and 219–221 (TSS) each bind GTP. Mg(2+)-binding residues include S71 and T93.

Belongs to the TRAFAC class TrmE-Era-EngA-EngB-Septin-like GTPase superfamily. EngB GTPase family. Mg(2+) serves as cofactor.

Functionally, necessary for normal cell division and for the maintenance of normal septation. This chain is Probable GTP-binding protein EngB, found in Brucella suis biovar 1 (strain 1330).